A 201-amino-acid polypeptide reads, in one-letter code: dITP/XTP pyrophosphatase (201 aa).

Threonine 9 to lysine 14 provides a ligand contact to substrate. Mg(2+)-binding residues include glutamate 42 and aspartate 71. Catalysis depends on aspartate 71, which acts as the Proton acceptor. Residues serine 72, phenylalanine 156 to aspartate 159, lysine 178, and histidine 183 to arginine 184 contribute to the substrate site.

Belongs to the HAM1 NTPase family. As to quaternary structure, homodimer. The cofactor is Mg(2+).

The catalysed reaction is XTP + H2O = XMP + diphosphate + H(+). The enzyme catalyses dITP + H2O = dIMP + diphosphate + H(+). It carries out the reaction ITP + H2O = IMP + diphosphate + H(+). In terms of biological role, pyrophosphatase that catalyzes the hydrolysis of nucleoside triphosphates to their monophosphate derivatives, with a high preference for the non-canonical purine nucleotides XTP (xanthosine triphosphate), dITP (deoxyinosine triphosphate) and ITP. Seems to function as a house-cleaning enzyme that removes non-canonical purine nucleotides from the nucleotide pool, thus preventing their incorporation into DNA/RNA and avoiding chromosomal lesions. In Lactococcus lactis subsp. lactis (strain IL1403) (Streptococcus lactis), this protein is dITP/XTP pyrophosphatase (ynbD).